Consider the following 398-residue polypeptide: Acetate kinase (398 aa).

Residue Asn8 participates in Mg(2+) binding. Lys15 provides a ligand contact to ATP. Position 89 (Arg89) interacts with substrate. Residue Asp146 is the Proton donor/acceptor of the active site. ATP-binding positions include 206-210 (HIGNG), 283-285 (DMR), and 331-335 (GMGEN). Glu383 serves as a coordination point for Mg(2+).

This sequence belongs to the acetokinase family. As to quaternary structure, homodimer. Mg(2+) is required as a cofactor. Mn(2+) serves as cofactor.

It is found in the cytoplasm. The catalysed reaction is acetate + ATP = acetyl phosphate + ADP. It participates in metabolic intermediate biosynthesis; acetyl-CoA biosynthesis; acetyl-CoA from acetate: step 1/2. Its function is as follows. Catalyzes the formation of acetyl phosphate from acetate and ATP. Can also catalyze the reverse reaction. In Streptococcus pyogenes serotype M4 (strain MGAS10750), this protein is Acetate kinase.